Here is a 1004-residue protein sequence, read N- to C-terminus: Sodium/potassium-transporting ATPase subunit alpha-B (1004 aa).

Transmembrane regions (helical) follow at residues 76–96 (LFGG…LAYG) and 110–126 (NLYL…VTGI). A disordered region spans residues 197-216 (SSLTGESEPQARSPEFTNDN). 2 helical membrane passes run 272–294 (FIHI…AFVL) and 301–329 (AVVF…TLTA). The 4-aspartylphosphate intermediate role is filled by D357. K489 contacts ATP. Mg(2+) is bound by residues D698 and D702. 4 helical membrane-spanning segments follow: residues 768–791 (ISPF…ILCI), 828–855 (ERLI…VIMA), 897–918 (SSCH…LIIS), and 934–959 (ILNF…DKGL).

It belongs to the cation transport ATPase (P-type) (TC 3.A.3) family. Type IIC subfamily. The sodium/potassium-transporting ATPase is composed of a catalytic alpha subunit, an auxiliary non-catalytic beta subunit and an additional regulatory subunit.

It localises to the cell membrane. It catalyses the reaction K(+)(out) + Na(+)(in) + ATP + H2O = K(+)(in) + Na(+)(out) + ADP + phosphate + H(+). Functionally, this is the catalytic component of the active enzyme, which catalyzes the hydrolysis of ATP coupled with the exchange of sodium and potassium ions across the plasma membrane. This action creates the electrochemical gradient of sodium and potassium ions, providing the energy for active transport of various nutrients. The polypeptide is Sodium/potassium-transporting ATPase subunit alpha-B (Artemia franciscana (Brine shrimp)).